The following is a 567-amino-acid chain: Multidrug and toxin extrusion protein 1 (567 aa).

M1 is modified (N-acetylmethionine). Over 1-37 the chain is Cytoplasmic; it reads MERTEESAPGPGGADAASERRGLRCLLLPGFLEELRA. At S18 the chain carries Phosphoserine. Residues 38–58 traverse the membrane as a helical segment; it reads LLVLAGPAFLAQLMMFLISFI. Over 59–72 the chain is Extracellular; sequence SSVFCGHLGKLELD. The helical transmembrane segment at 73-93 threads the bilayer; that stretch reads AVTLAIAVINVTGISVGHGLS. Over 94 to 120 the chain is Cytoplasmic; the sequence is SACDTLISQTYGSQNLKHVGVILQRGT. Residues 121-141 form a helical membrane-spanning segment; the sequence is LILLLCCFPCWALFINTEQIL. The Extracellular portion of the chain corresponds to 142–152; that stretch reads LLFRQDPDVSR. A helical membrane pass occupies residues 153-173; that stretch reads LTQTYVMIFIPALPAAFLYTL. Residues 174–187 are Cytoplasmic-facing; it reads QVKYLLNQGIVLPQ. A helical membrane pass occupies residues 188-208; that stretch reads IMTGIAANLVNALANYVFLYH. Residues 209 to 216 are Extracellular-facing; sequence LHLGVMGS. The chain crosses the membrane as a helical span at residues 217 to 237; it reads ALANTISQFALAIFLFLYILW. Topologically, residues 238–257 are cytoplasmic; sequence RRLHQATWGGWSWECLQDWA. Residues 258–277 traverse the membrane as a helical segment; it reads SFLRLAIPSMLMLCIEWWAY. Over 278 to 295 the chain is Extracellular; that stretch reads EVGSFLSGILGMVELGAQ. A helical membrane pass occupies residues 296–316; the sequence is SITYELAIIVYMIPSGFSVAA. Over 317-336 the chain is Cytoplasmic; the sequence is NVRVGNALGAGNIDQAKKSS. A helical transmembrane segment spans residues 337-357; the sequence is AISLIVTELFAVTFCVLLLGC. Residues 358–370 lie on the Extracellular side of the membrane; sequence KDLVGYIFTTDRD. A helical transmembrane segment spans residues 371 to 391; the sequence is IVALVAQVIPIYAVSHLFEGL. Residues 392–408 lie on the Cytoplasmic side of the membrane; that stretch reads ACTCGGILRGTGNQKVG. A helical membrane pass occupies residues 409 to 429; that stretch reads AIVNAIGYYVIGLPIGIALMF. At 430 to 437 the chain is on the extracellular side; the sequence is AAKLGVIG. Residues 438–458 traverse the membrane as a helical segment; sequence LWSGIIICTTCQTTCFLAFIA. Residues 459–543 are Cytoplasmic-facing; that stretch reads RLNWKRACQQ…LSGKQLALRR (85 aa). Residues 544–564 form a helical membrane-spanning segment; it reads GLLLLGVVLVLVGGILVRVYI. The Extracellular portion of the chain corresponds to 565–567; sequence RIE.

It belongs to the multi antimicrobial extrusion (MATE) (TC 2.A.66.1) family. In terms of tissue distribution, predominantly expressed in kidney and liver. Also expressed in various cells, including brain glia-like cells and capillaries, pancreatic duct cells, urinary bladder epithelium, adrenal gland cortex, heart, stomach, small intestine, thyroid gland, testes, alpha cells of the islets of Langerhans, Leydig cells, and vitamin A-storing Ito cells. Expressed in heart, stomach, small intestine, bladder, thyroid gland, adrenal gland and testes (at protein level).

Its subcellular location is the cell membrane. The protein localises to the apical cell membrane. It catalyses the reaction thiamine(out) + H(+)(in) = thiamine(in) + H(+)(out). The catalysed reaction is estrone 3-sulfate(in) + H(+)(out) = estrone 3-sulfate(out) + H(+)(in). It carries out the reaction creatinine(in) + H(+)(out) = creatinine(out) + H(+)(in). The enzyme catalyses agmatine(in) + H(+)(out) = agmatine(out) + H(+)(in). In terms of biological role, multidrug efflux pump that functions as a H(+)/organic cation antiporter. Plays a physiological role in the excretion of cationic compounds including endogenous metabolites, drugs, toxins through the kidney and liver, into urine and bile respectively. Mediates the efflux of endogenous compounds such as creatinine, vitamin B1/thiamine, agmatine and estrone-3-sulfate. May also contribute to regulate the transport of cationic compounds in testis across the blood-testis-barrier. In Mus musculus (Mouse), this protein is Multidrug and toxin extrusion protein 1 (Slc47a1).